The primary structure comprises 353 residues: UPF0283 membrane protein YcjF (353 aa).

The next 3 helical transmembrane spans lie at 70-90 (MVMGGLALFGASVVGQGIQWT), 100-120 (VALGGCAAGALIIGAGVGSVV), and 213-233 (ESTLMIAVSPLALVDMAFIAW).

This sequence belongs to the UPF0283 family.

The protein localises to the cell inner membrane. In Shigella flexneri serotype 5b (strain 8401), this protein is UPF0283 membrane protein YcjF.